The following is a 512-amino-acid chain: Lysine--tRNA ligase (512 aa).

Mg(2+) is bound by residues Glu408 and Glu415.

The protein belongs to the class-II aminoacyl-tRNA synthetase family. In terms of assembly, homodimer. Mg(2+) is required as a cofactor.

It localises to the cytoplasm. It catalyses the reaction tRNA(Lys) + L-lysine + ATP = L-lysyl-tRNA(Lys) + AMP + diphosphate. This chain is Lysine--tRNA ligase, found in Prochlorococcus marinus (strain MIT 9215).